Here is a 290-residue protein sequence, read N- to C-terminus: MITSPTTWPSPAKLNLFLYINGRTDNGYHELQTLFQFLDHGDQLTITANDSGHITLTPDIVDLPVEQNLIWKAANALQKKTGCTLGANIHLNKILPMGGGIGGGSSNAATALVALNFLWQLGLSDDELADIGLKLGADVPVFVRGHAAFAEGVGEKLTPAQPEEKWYLVVRPDVHIATVDIFTHPQLTRNTPKRSLETLLDSEYGNDCEKIVRMIHPKVDKQLSWLLQYAPSRLTGTGSCVFAEFNSRSEAESILAQLSDNVSAFVAQGRNISPLKETLADYLSAQNRPI.

The active site involves Lys-13. An ATP-binding site is contributed by 96-106; that stretch reads PMGGGIGGGSS. Asp-138 is an active-site residue.

Belongs to the GHMP kinase family. IspE subfamily.

The enzyme catalyses 4-CDP-2-C-methyl-D-erythritol + ATP = 4-CDP-2-C-methyl-D-erythritol 2-phosphate + ADP + H(+). It participates in isoprenoid biosynthesis; isopentenyl diphosphate biosynthesis via DXP pathway; isopentenyl diphosphate from 1-deoxy-D-xylulose 5-phosphate: step 3/6. Its function is as follows. Catalyzes the phosphorylation of the position 2 hydroxy group of 4-diphosphocytidyl-2C-methyl-D-erythritol. The sequence is that of 4-diphosphocytidyl-2-C-methyl-D-erythritol kinase from Vibrio vulnificus (strain CMCP6).